The primary structure comprises 123 residues: Large ribosomal subunit protein uL14 (123 aa).

This sequence belongs to the universal ribosomal protein uL14 family. In terms of assembly, part of the 50S ribosomal subunit. Forms a cluster with proteins L3 and L19. In the 70S ribosome, L14 and L19 interact and together make contacts with the 16S rRNA in bridges B5 and B8.

In terms of biological role, binds to 23S rRNA. Forms part of two intersubunit bridges in the 70S ribosome. This chain is Large ribosomal subunit protein uL14, found in Histophilus somni (strain 129Pt) (Haemophilus somnus).